The chain runs to 429 residues: Enolase (429 aa).

(2R)-2-phosphoglycerate is bound at residue Gln167. Glu209 acts as the Proton donor in catalysis. Mg(2+) is bound by residues Asp246, Glu289, and Asp316. 4 residues coordinate (2R)-2-phosphoglycerate: Lys341, Arg370, Ser371, and Lys392. Lys341 (proton acceptor) is an active-site residue.

Belongs to the enolase family. As to quaternary structure, component of the RNA degradosome, a multiprotein complex involved in RNA processing and mRNA degradation. Requires Mg(2+) as cofactor.

It is found in the cytoplasm. The protein localises to the secreted. Its subcellular location is the cell surface. The enzyme catalyses (2R)-2-phosphoglycerate = phosphoenolpyruvate + H2O. Its pathway is carbohydrate degradation; glycolysis; pyruvate from D-glyceraldehyde 3-phosphate: step 4/5. In terms of biological role, catalyzes the reversible conversion of 2-phosphoglycerate (2-PG) into phosphoenolpyruvate (PEP). It is essential for the degradation of carbohydrates via glycolysis. This chain is Enolase, found in Pseudomonas aeruginosa (strain LESB58).